A 550-amino-acid polypeptide reads, in one-letter code: Membrane protein insertase YidC (550 aa).

The chain crosses the membrane as a helical span at residues 6-26 (LIVFIVLSFGLLFVWQEYFAP). Residues 30–59 (PKPVAAAVQPDGTPAPATARPADSPATGKL) are disordered. A run of 4 helical transmembrane segments spans residues 360 to 380 (WGWAIVLLTVLVKAAFYPLSA), 430 to 450 (LPIVVQIPVFIGLYWALLASV), 472 to 492 (ILPALMAATMYLQTFLNPPPA), and 504 to 524 (PLAFSVMFFFFPAGLVLYWLV).

Belongs to the OXA1/ALB3/YidC family. Type 1 subfamily. As to quaternary structure, interacts with the Sec translocase complex via SecD. Specifically interacts with transmembrane segments of nascent integral membrane proteins during membrane integration.

It localises to the cell inner membrane. Required for the insertion and/or proper folding and/or complex formation of integral membrane proteins into the membrane. Involved in integration of membrane proteins that insert both dependently and independently of the Sec translocase complex, as well as at least some lipoproteins. Aids folding of multispanning membrane proteins. The polypeptide is Membrane protein insertase YidC (Laribacter hongkongensis (strain HLHK9)).